A 512-amino-acid polypeptide reads, in one-letter code: MEESQRYLQLERSQQHDFLYPLIFQEYIYAFAYDRGFSRSSLSENPSYNNKSSLLIVKRLITRMYQQNHFIIYYPNDSNQNTFWARRNNLYSPIISEGFAFIVEIPFSLGLIYCLEGKNKKIVKSQNLRSIHSIFPFLEDNFSHLNFVLDILIPQPVHVEILVQTLRCRVKDASSLHLLRFFLNEYCNSKSLITPQKASSSFSKKNKRLFLFLYNSHLCEYESIFVFLRTKSSHLRSTSLGVLLERIYFYGKIERVVNIFVKVKDFQANLRLVKEPCMHYIRYQRKSILASKGTSLFMNKWKSYLVAFWQWHFSQWFHPRRIYINHISNHSLEFLGYLSNVRMNPSVVRSQIIENSFLINNAIKKVDTLIPIIPLIAAXXKAKFXNVLGHPIXKSVRADLSDFNIIDRFGRICRNLSHYYSGSSKKKSLYRIKYILRLSCARTLARKHKSTVRTFLKRLGSEFLEEFLMSEEDVLFFTFPKASSTLWGVYRSRIWYLDIISINDLANHKSKL.

Belongs to the intron maturase 2 family. MatK subfamily.

It is found in the plastid. The protein resides in the chloroplast. Usually encoded in the trnK tRNA gene intron. Probably assists in splicing its own and other chloroplast group II introns. The protein is Maturase K of Erythranthe guttata (Yellow monkey flower).